Consider the following 256-residue polypeptide: uncharacterized protein (256 aa).

A signal peptide spans 1–22 (MNNFRQCALCIGTSVLILLVSG). Cysteine 23 is lipidated: N-palmitoyl cysteine. Residue cysteine 23 is the site of S-diacylglycerol cysteine attachment.

This sequence belongs to the staphylococcal tandem lipoprotein family.

It localises to the cell membrane. This is an uncharacterized protein from Staphylococcus aureus (strain bovine RF122 / ET3-1).